A 307-amino-acid polypeptide reads, in one-letter code: MEDVGQNPLDDVKNIFFASSLEAVKQNLDCLNSDLEKDLQKLDMENQVLLRKIKEKEETISSLERKLALSLEEAKEEEELNYVIDEQEESLRELELETAKLEKSNAILSRNVVEVQKKISGLFTNIGLEEETTKQILEEMKARLQKSTESCAKQEEELAKIESDYQSVSDLCKDQVYYIKKYQEVLRKMKEEKETLLLEKQISKAQDDSSQTVKPGSILADTTQRNMERTTIKKQERRCWYKYFQYLTFMVLVFIRLLAYVIFHLQYINPDLLVDVLPLVLSRGTLESLRKVSHPFLTLAVEEALPH.

Residues 17–207 (FASSLEAVKQ…LEKQISKAQD (191 aa)) are a coiled coil. A helical transmembrane segment spans residues 243–265 (YFQYLTFMVLVFIRLLAYVIFHL).

It belongs to the TMCO5 family.

Its subcellular location is the membrane. The polypeptide is Transmembrane and coiled-coil domain-containing protein 5B (TMCO5B) (Homo sapiens (Human)).